The chain runs to 612 residues: Elongation factor 4 (612 aa).

In terms of domain architecture, tr-type G spans 12 to 194 (SRIRNFSIIA…QIVEKVPAPS (183 aa)). Residues 24–29 (DHGKST) and 141–144 (NKID) each bind GTP.

The protein belongs to the TRAFAC class translation factor GTPase superfamily. Classic translation factor GTPase family. LepA subfamily.

It is found in the cell membrane. It catalyses the reaction GTP + H2O = GDP + phosphate + H(+). Functionally, required for accurate and efficient protein synthesis under certain stress conditions. May act as a fidelity factor of the translation reaction, by catalyzing a one-codon backward translocation of tRNAs on improperly translocated ribosomes. Back-translocation proceeds from a post-translocation (POST) complex to a pre-translocation (PRE) complex, thus giving elongation factor G a second chance to translocate the tRNAs correctly. Binds to ribosomes in a GTP-dependent manner. This Bacillus licheniformis (strain ATCC 14580 / DSM 13 / JCM 2505 / CCUG 7422 / NBRC 12200 / NCIMB 9375 / NCTC 10341 / NRRL NRS-1264 / Gibson 46) protein is Elongation factor 4.